Reading from the N-terminus, the 597-residue chain is Gigaxonin (597 aa).

The 70-residue stretch at 30 to 99 (CDAHLVLDGE…IFSGQIRLNE (70 aa)) folds into the BTB domain. Positions 134-236 (CIGIRDFALH…DSSYLREQML (103 aa)) constitute a BACK domain. 6 Kelch repeats span residues 274 to 326 (CIVT…SAEG), 327 to 374 (FLFV…EIDG), 376 to 421 (LYIL…AMKK), 422 to 468 (KIYA…GVAM), 470 to 522 (LYVF…VYGA), and 528 to 574 (SIYV…AALR).

In terms of assembly, interacts with TBCB. Interacts with CUL3. Part of a complex that contains CUL3, RBX1 and GAN. Interacts (via BTB domain) with UBA1. Interacts (via Kelch domains) with MAP1B (via C-terminus) and MAP1S (via C-terminus). Post-translationally, ubiquitinated by E3 ubiquitin ligase complex formed by CUL3 and RBX1 and probably targeted for proteasome-independent degradation. Expressed in brain, heart and muscle (at protein level).

The protein localises to the cytoplasm. It localises to the cytoskeleton. Its pathway is protein modification; protein ubiquitination. Functionally, probable cytoskeletal component that directly or indirectly plays an important role in neurofilament architecture. May act as a substrate-specific adapter of an E3 ubiquitin-protein ligase complex which mediates the ubiquitination and subsequent proteasomal degradation of target proteins. Controls degradation of TBCB. Controls degradation of MAP1B and MAP1S, and is critical for neuronal maintenance and survival. This chain is Gigaxonin, found in Mus musculus (Mouse).